The sequence spans 201 residues: Myosin regulatory light chain 2 (201 aa).

Positions M1–V48 are disordered. The span at E20–A29 shows a compositional bias: low complexity. The residue at position 46 (S46) is a Phosphoserine. EF-hand domains are found at residues K55 to L90, D125 to K158, and F159 to E194. Residues D68, D70, D72, and D79 each coordinate Ca(2+).

As to quaternary structure, myosin is a hexamer of 2 heavy chains and 4 light chains.

The chain is Myosin regulatory light chain 2 from Bombyx mori (Silk moth).